The primary structure comprises 202 residues: Pyridoxal 5'-phosphate synthase subunit PdxT (202 aa).

Residue 50–52 participates in L-glutamine binding; that stretch reads GES. Cysteine 82 acts as the Nucleophile in catalysis. L-glutamine-binding positions include arginine 111 and 140-141; that span reads IR. Active-site charge relay system residues include histidine 176 and glutamate 178.

The protein belongs to the glutaminase PdxT/SNO family. In the presence of PdxS, forms a dodecamer of heterodimers. Only shows activity in the heterodimer.

It catalyses the reaction aldehydo-D-ribose 5-phosphate + D-glyceraldehyde 3-phosphate + L-glutamine = pyridoxal 5'-phosphate + L-glutamate + phosphate + 3 H2O + H(+). It carries out the reaction L-glutamine + H2O = L-glutamate + NH4(+). Its pathway is cofactor biosynthesis; pyridoxal 5'-phosphate biosynthesis. Catalyzes the hydrolysis of glutamine to glutamate and ammonia as part of the biosynthesis of pyridoxal 5'-phosphate. The resulting ammonia molecule is channeled to the active site of PdxS. In Streptomyces coelicolor (strain ATCC BAA-471 / A3(2) / M145), this protein is Pyridoxal 5'-phosphate synthase subunit PdxT.